The sequence spans 100 residues: MATMTKKKLISTISQDHKIHPNHVRTVIQNFLDKMTDALVKGDRLEFRDFGVLQVVERKPKVGRNPKNAAVPIHIPARRAVKFTPGKRMKRLIETPNKHS.

The protein belongs to the bacterial histone-like protein family.

Its function is as follows. Histone-like DNA-binding protein which is capable of wrapping DNA to stabilize it, and thus to prevent its denaturation under extreme environmental conditions. In Chlamydia pneumoniae (Chlamydophila pneumoniae), this protein is Probable DNA-binding protein HU (hup).